Reading from the N-terminus, the 345-residue chain is Selenide, water dikinase (345 aa).

Cys15 is an active-site residue. ATP is bound by residues Lys18 and 46 to 48; that span reads SKD. A Mg(2+)-binding site is contributed by Asp49. ATP-binding positions include Asp66, Asp89, and 137–139; that span reads GHS. Mg(2+) is bound at residue Asp89. Asp225 contributes to the Mg(2+) binding site.

It belongs to the selenophosphate synthase 1 family. Class I subfamily. In terms of assembly, homodimer. Requires Mg(2+) as cofactor.

It catalyses the reaction hydrogenselenide + ATP + H2O = selenophosphate + AMP + phosphate + 2 H(+). Its function is as follows. Synthesizes selenophosphate from selenide and ATP. The sequence is that of Selenide, water dikinase from Aeromonas hydrophila subsp. hydrophila (strain ATCC 7966 / DSM 30187 / BCRC 13018 / CCUG 14551 / JCM 1027 / KCTC 2358 / NCIMB 9240 / NCTC 8049).